A 485-amino-acid chain; its full sequence is Glutamyl-tRNA(Gln) amidotransferase subunit A (485 aa).

Residues Lys-79 and Ser-154 each act as charge relay system in the active site. Ser-178 serves as the catalytic Acyl-ester intermediate.

The protein belongs to the amidase family. GatA subfamily. In terms of assembly, heterotrimer of A, B and C subunits.

It carries out the reaction L-glutamyl-tRNA(Gln) + L-glutamine + ATP + H2O = L-glutaminyl-tRNA(Gln) + L-glutamate + ADP + phosphate + H(+). Allows the formation of correctly charged Gln-tRNA(Gln) through the transamidation of misacylated Glu-tRNA(Gln) in organisms which lack glutaminyl-tRNA synthetase. The reaction takes place in the presence of glutamine and ATP through an activated gamma-phospho-Glu-tRNA(Gln). The polypeptide is Glutamyl-tRNA(Gln) amidotransferase subunit A (Staphylococcus haemolyticus (strain JCSC1435)).